The primary structure comprises 445 residues: Histidine--tRNA ligase (445 aa).

Belongs to the class-II aminoacyl-tRNA synthetase family. Homodimer.

It is found in the cytoplasm. It carries out the reaction tRNA(His) + L-histidine + ATP = L-histidyl-tRNA(His) + AMP + diphosphate + H(+). The chain is Histidine--tRNA ligase from Mycoplasma mobile (strain ATCC 43663 / 163K / NCTC 11711) (Mesomycoplasma mobile).